Reading from the N-terminus, the 291-residue chain is Dihydroorotate dehydrogenase B (NAD(+)), catalytic subunit (291 aa).

Residues Ser-17 and 42–43 (KT) contribute to the FMN site. Substrate-binding positions include Lys-42, 67–71 (NAIGL), and Asn-118. Residue Asn-118 coordinates FMN. Ser-121 serves as the catalytic Nucleophile. Residues Lys-153 and Ile-178 each contribute to the FMN site. Position 179–180 (179–180 (NT)) interacts with substrate. Residues Gly-204, 230–231 (GG), and 252–253 (GT) each bind FMN.

The protein belongs to the dihydroorotate dehydrogenase family. Type 1 subfamily. As to quaternary structure, heterotetramer of 2 PyrK and 2 PyrD type B subunits. FMN is required as a cofactor.

It is found in the cytoplasm. It carries out the reaction (S)-dihydroorotate + NAD(+) = orotate + NADH + H(+). The protein operates within pyrimidine metabolism; UMP biosynthesis via de novo pathway; orotate from (S)-dihydroorotate (NAD(+) route): step 1/1. Functionally, catalyzes the conversion of dihydroorotate to orotate with NAD(+) as electron acceptor. The sequence is that of Dihydroorotate dehydrogenase B (NAD(+)), catalytic subunit (pyrD) from Sulfolobus acidocaldarius (strain ATCC 33909 / DSM 639 / JCM 8929 / NBRC 15157 / NCIMB 11770).